The primary structure comprises 384 residues: Troponin T (384 aa).

The segment covering 1 to 15 has biased composition (acidic residues); the sequence is MSDEEEYSEEEEEVP. 4 disordered regions span residues 1–23, 61–169, 237–257, and 313–384; these read MSDE…PRHS, RAKE…KEQL, LRHK…KYPP, and PKWF…EEEE. Basic and acidic residues-rich tracts occupy residues 61-74 and 81-126; these read RAKE…LKDK and MRAD…EKKR. Residues 316–327 are compositionally biased toward basic and acidic residues; that stretch reads FGERPGKKKGDP. Acidic residues predominate over residues 328–384; sequence ESPEEEEVKADAGVDDELEEPTFEPEPEPEPEEEAAEEEAEEEEEEEEEEEEEEEEE.

This sequence belongs to the troponin T family.

Troponin T is the tropomyosin-binding subunit of troponin, the thin filament regulatory complex which confers calcium-sensitivity to striated muscle actomyosin ATPase activity. This Periplaneta americana (American cockroach) protein is Troponin T (TNT).